The primary structure comprises 130 residues: Small ribosomal subunit protein uS11 (130 aa).

Belongs to the universal ribosomal protein uS11 family. As to quaternary structure, part of the 30S ribosomal subunit. Interacts with proteins S7 and S18. Binds to IF-3.

Functionally, located on the platform of the 30S subunit, it bridges several disparate RNA helices of the 16S rRNA. Forms part of the Shine-Dalgarno cleft in the 70S ribosome. The chain is Small ribosomal subunit protein uS11 from Prochlorococcus marinus (strain AS9601).